The sequence spans 121 residues: uncharacterized protein (121 aa).

Disordered stretches follow at residues 1–28 (MGCA…QNGD) and 60–82 (QENL…VPGL). Phosphoserine occurs at positions 95 and 115.

As to expression, expressed in spleen, prostate, testis and uterus.

This is an uncharacterized protein from Homo sapiens (Human).